The primary structure comprises 58 residues: Proteinase inhibitor PSKP-2 (58 aa).

Residues 1-58 (VIEPDCKKYEGKKCPPDIALVCGTNGREYYNECALCVFIRDSTLKADKAIKIKKWGKC) enclose the Kazal-like domain. 3 disulfides stabilise this stretch: Cys-6–Cys-36, Cys-14–Cys-33, and Cys-22–Cys-58.

In terms of tissue distribution, skin.

It is found in the secreted. In terms of biological role, may have a role in mucosal defense against microbes by interacting directly with their membranes. This is Proteinase inhibitor PSKP-2 from Phyllomedusa sauvagei (Sauvage's leaf frog).